The sequence spans 188 residues: Elongation factor P-like protein (188 aa).

The protein belongs to the elongation factor P family.

This Xylella fastidiosa (strain M12) protein is Elongation factor P-like protein.